The sequence spans 540 residues: tRNA-2-methylthio-N(6)-dimethylallyladenosine synthase (540 aa).

The 117-residue stretch at 41–157 (RTYEVRTFGC…LPTLLERSAH (117 aa)) folds into the MTTase N-terminal domain. [4Fe-4S] cluster contacts are provided by cysteine 50, cysteine 86, cysteine 120, cysteine 194, cysteine 198, and cysteine 201. Residues 180 to 416 (RESAYSGWVS…IALQERIQAE (237 aa)) enclose the Radical SAM core domain. The 68-residue stretch at 419 to 486 (KELVGTTQEL…PFFLIADGPL (68 aa)) folds into the TRAM domain.

Belongs to the methylthiotransferase family. MiaB subfamily. Monomer. The cofactor is [4Fe-4S] cluster.

The protein localises to the cytoplasm. The catalysed reaction is N(6)-dimethylallyladenosine(37) in tRNA + (sulfur carrier)-SH + AH2 + 2 S-adenosyl-L-methionine = 2-methylsulfanyl-N(6)-dimethylallyladenosine(37) in tRNA + (sulfur carrier)-H + 5'-deoxyadenosine + L-methionine + A + S-adenosyl-L-homocysteine + 2 H(+). Its function is as follows. Catalyzes the methylthiolation of N6-(dimethylallyl)adenosine (i(6)A), leading to the formation of 2-methylthio-N6-(dimethylallyl)adenosine (ms(2)i(6)A) at position 37 in tRNAs that read codons beginning with uridine. The polypeptide is tRNA-2-methylthio-N(6)-dimethylallyladenosine synthase (Corynebacterium urealyticum (strain ATCC 43042 / DSM 7109)).